The following is a 256-amino-acid chain: V-type proton ATPase subunit D (256 aa).

Positions 211-230 (QNETAKLDAEMKLKRDRAEQ) are enriched in basic and acidic residues. A disordered region spans residues 211–256 (QNETAKLDAEMKLKRDRAEQDASEVAADEEPQGETLVADQEDDVIF).

It belongs to the V-ATPase D subunit family. V-ATPase is a heteromultimeric enzyme composed of a peripheral catalytic V1 complex (components A to H) attached to an integral membrane V0 proton pore complex (components: a, c, c', c'', d, e, f and VOA1). Interacts with RAV1 and RAV2 components of the RAVE complex, which are essential for the stability and assembly of V-ATPase.

The protein localises to the vacuole membrane. In terms of biological role, subunit of the V1 complex of vacuolar(H+)-ATPase (V-ATPase), a multisubunit enzyme composed of a peripheral complex (V1) that hydrolyzes ATP and a membrane integral complex (V0) that translocates protons. V-ATPase is responsible for acidifying and maintaining the pH of intracellular compartments. The chain is V-type proton ATPase subunit D from Saccharomyces cerevisiae (strain ATCC 204508 / S288c) (Baker's yeast).